The following is a 1177-amino-acid chain: MEGCILADSRQSKTAASPSPSRPQSSSNNSVPGAPNRVSFAKLREPLEVPGLLDVQTDSFEWLIGSPRWRESAAERGDVNPVGGLEEVLYELSPIEDFSGSMSLSFSDPRFDDVKAPVDECKDKDMTYAAPLFVTAEFINNNTGEIKSQTVFMGDFPMMTEKGTFIINGTERVVVSQLVRSPGVYFDETIDKSTDKTLHSVKVIPSRGAWLEFDVDKRDTVGVRIDRKRRQPVTVLLKALGWTSEQIVERFGFSEIMRSTLEKDNTVGTDEALLDIYRKLRPGEPPTKESAQTLLENLFFKEKRYDLARVGRYKVNKKLGLHVGEPITSSTLTEEDVVATIEYLVRLHEGQTTMTVPGGVEVPVETDDIDHFGNRRLRTVGELIQNQIRVGMSRMERVVRERMTTQDVEAITPQTLINIRPVVAAIKEFFGTSQLSQFMDQNNPLSGLTHKRRLSALGPGGLSRERAGLEVRDVHPSHYGRMCPIETPEGPNIGLIGSLSVYARVNPFGFIETPYRKVVDGVVSDEIVYLTADEEDRHVVAQANSPIDADGRFVEPRVLVRRKAGEVEYVPSSEVDYMDVSPRQMVSVATAMIPFLEHDDANRALMGANMQRQAVPLVRSEAPLVGTGMELRAAIDAGDVVVAEESGVIEEVSADYITVMHDNGTRRTYRMRKFARSNHGTCANQCPIVDAGDRVEAGQVIADGPCTDDGEMALGKNLLVAIMPWEGHNYEDAIILSNRLVEEDVLTSIHIEEHEIDARDTKLGAEEITRDIPNISDEVLADLDERGIVRIGAEVRDGDILVGKVTPKGETELTPEERLLRAIFGEKAREVRDTSLKVPHGESGKVIGIRVFSREDEDELPAGVNELVRVYVAQKRKISDGDKLAGRHGNKGVIGKILPVEDMPFLADGTPVDIILNTHGVPRRMNIGQILETHLGWCAHSGWKVDAAKGVPDWAARLPDELLEAQPNAIVSTPVFDGAQEAELQGLLSCTLPNRDGDVLVDADGKAMLFDGRSGEPFPYPVTVGYMYIMKLHHLVDDKIHARSTGPYSMITQQPLGGKAQFGGQRFGEMECWAMQAYGAAYTLQELLTIKSDDTVGRVKVYEAIVKGENIPEPGIPESFKVLLKELQSLCLNVEVLSSDGAAIELREGEDEDLERAAANLGINLSRNESASVEDLA.

The segment at 1 to 36 (MEGCILADSRQSKTAASPSPSRPQSSSNNSVPGAPN) is disordered. A compositionally biased stretch (low complexity) spans 17-32 (SPSPSRPQSSSNNSVP).

It belongs to the RNA polymerase beta chain family. As to quaternary structure, the RNAP catalytic core consists of 2 alpha, 1 beta, 1 beta' and 1 omega subunit. When a sigma factor is associated with the core the holoenzyme is formed, which can initiate transcription.

It carries out the reaction RNA(n) + a ribonucleoside 5'-triphosphate = RNA(n+1) + diphosphate. DNA-dependent RNA polymerase catalyzes the transcription of DNA into RNA using the four ribonucleoside triphosphates as substrates. The protein is DNA-directed RNA polymerase subunit beta of Mycobacterium tuberculosis (strain ATCC 25177 / H37Ra).